The sequence spans 632 residues: METAVAAAPAWGFFSSFLLLAFGTLVAALLGAAHRLGLFYQLMHKVDTASTRHGGENVAAVLKAHGVRFLFTLVGGHISPLLVACEKLGIRVVDTRHEVTAVFAADAVARLTGTVGVAAVTAGPGLTNTVTAVKNAQIAQSPVLLLGGAASTLLQNRGALQAIDQIALFRPLCKFCASVRRVRDIIPTLRAAMAAAQSGTPGPVFVELPLDVLYPYFMVQKEMVPAKPPKGLMSRAVHWYLANSLANLFAGAWEPQPEGPLPLDIPQASPQQVQRCVEILSRAKKPLMLIGSQALLPPTSSDKLRVAVETLGIPCFLAGMARGLLGRNHPLHFRQNRRAALKKADVVVLAGAVCDFRLSYGRVLSRSSKIIVVNRDRKEMLINSDIFWKPQEAVQGDVGSFVVKLVEGLRGQMWASDWAEELRQADQQKEQAFREKALMPVAQHLNPVRVLQLVEDTLPDNSILVVDGGDFVGTAAYLVQPRGPLRWLDPGAFGTLGVGAGFALGAKLCRPDAEVWCLFGDGAFGYSLIEFDTFVRHKIPVMALIGNDAGWTQISREQVPSLGSNVACGLAYTDYHKAAQGLGAQGLLLSRENEDQVVKVLRDAQQWCQDGHPVVVNILIGRTDFRDGSIAM.

Residues 10–30 (AWGFFSSFLLLAFGTLVAALL) form a helical membrane-spanning segment. A thiamine diphosphate-binding site is contributed by Glu98. Positions 470–550 (DFVGTAAYLV…VMALIGNDAG (81 aa)) are thiamine pyrophosphate binding. Residues Asp521 and Asn547 each coordinate Mg(2+).

Belongs to the TPP enzyme family. Mg(2+) serves as cofactor. Requires thiamine diphosphate as cofactor.

The protein resides in the endoplasmic reticulum membrane. It catalyses the reaction 2-hydroxyoctadecanoyl-CoA = heptadecanal + formyl-CoA. It carries out the reaction (2R)-hydroxyhexadecanoyl-CoA = pentadecanal + formyl-CoA. In terms of biological role, endoplasmic reticulum 2-OH acyl-CoA lyase involved in the cleavage (C1 removal) reaction in the fatty acid alpha-oxydation in a thiamine pyrophosphate (TPP)-dependent manner. Involved in the phytosphingosine degradation pathway. This Bos taurus (Bovine) protein is 2-hydroxyacyl-CoA lyase 2 (ILVBL).